The following is a 215-amino-acid chain: Protein-L-isoaspartate O-methyltransferase (215 aa).

Serine 62 is an active-site residue.

The protein belongs to the methyltransferase superfamily. L-isoaspartyl/D-aspartyl protein methyltransferase family.

It localises to the cytoplasm. The enzyme catalyses [protein]-L-isoaspartate + S-adenosyl-L-methionine = [protein]-L-isoaspartate alpha-methyl ester + S-adenosyl-L-homocysteine. Catalyzes the methyl esterification of L-isoaspartyl residues in peptides and proteins that result from spontaneous decomposition of normal L-aspartyl and L-asparaginyl residues. It plays a role in the repair and/or degradation of damaged proteins. This Ruegeria sp. (strain TM1040) (Silicibacter sp.) protein is Protein-L-isoaspartate O-methyltransferase.